The sequence spans 373 residues: CXADR-like membrane protein (373 aa).

The signal sequence occupies residues 1-17 (MSLFFLWLVSYYVGTLG). 2 consecutive Ig-like C2-type domains span residues 18 to 126 (THTE…VILK) and 134 to 223 (PKCE…VRVT). Residues 18–234 (THTEIKRVAE…QYVQSIGMVA (217 aa)) are Extracellular-facing. Disulfide bonds link Cys-34/Cys-110 and Cys-152/Cys-207. N-linked (GlcNAc...) asparagine glycans are attached at residues Asn-73 and Asn-196. A helical transmembrane segment spans residues 235–255 (GAVTGIVAGALLIFLLIWLLI). Residues 256 to 373 (RRKSKDRYEE…PSQSKAFQTV (118 aa)) lie on the Cytoplasmic side of the membrane. Residues 263–280 (YEEEDRPNEIREDAEAPR) show a composition bias toward basic and acidic residues. The disordered stretch occupies residues 263-373 (YEEEDRPNEI…PSQSKAFQTV (111 aa)). Low complexity-rich tracts occupy residues 287-313 (SSSS…ASRS), 321-332 (AAPQQPGLAPQA), and 353-363 (LTKAETTLSTT). Residues 364–373 (PSQSKAFQTV) show a composition bias toward polar residues.

Predominantly expressed in epithelial cells within different tissues and in the white adipose tissue. Expressed at high levels in the heart and brain, at intermediate levels in the lung, skeletal muscle, kidney and testis and at low levels in the liver and spleen.

It is found in the cell junction. Its subcellular location is the tight junction. It localises to the cell membrane. May be involved in the cell-cell adhesion. May play a role in adipocyte differentiation and development of obesity. Is required for normal small intestine development. The polypeptide is CXADR-like membrane protein (Clmp) (Mus musculus (Mouse)).